The following is a 498-amino-acid chain: Lysine--tRNA ligase (498 aa).

Mg(2+) contacts are provided by Glu-408 and Glu-415.

Belongs to the class-II aminoacyl-tRNA synthetase family. As to quaternary structure, homodimer. Mg(2+) serves as cofactor.

It is found in the cytoplasm. The catalysed reaction is tRNA(Lys) + L-lysine + ATP = L-lysyl-tRNA(Lys) + AMP + diphosphate. This chain is Lysine--tRNA ligase, found in Pediococcus pentosaceus (strain ATCC 25745 / CCUG 21536 / LMG 10740 / 183-1w).